Here is a 157-residue protein sequence, read N- to C-terminus: 6,7-dimethyl-8-ribityllumazine synthase (157 aa).

Residues Phe-22, 57-59 (AYE), and 81-83 (TVI) contribute to the 5-amino-6-(D-ribitylamino)uracil site. 86-87 (GT) is a binding site for (2S)-2-hydroxy-3-oxobutyl phosphate. His-89 functions as the Proton donor in the catalytic mechanism. Phe-114 is a binding site for 5-amino-6-(D-ribitylamino)uracil. Residue Arg-128 coordinates (2S)-2-hydroxy-3-oxobutyl phosphate.

Belongs to the DMRL synthase family. As to quaternary structure, forms an icosahedral capsid composed of 60 subunits, arranged as a dodecamer of pentamers.

The enzyme catalyses (2S)-2-hydroxy-3-oxobutyl phosphate + 5-amino-6-(D-ribitylamino)uracil = 6,7-dimethyl-8-(1-D-ribityl)lumazine + phosphate + 2 H2O + H(+). It participates in cofactor biosynthesis; riboflavin biosynthesis; riboflavin from 2-hydroxy-3-oxobutyl phosphate and 5-amino-6-(D-ribitylamino)uracil: step 1/2. Catalyzes the formation of 6,7-dimethyl-8-ribityllumazine by condensation of 5-amino-6-(D-ribitylamino)uracil with 3,4-dihydroxy-2-butanone 4-phosphate. This is the penultimate step in the biosynthesis of riboflavin. This Histophilus somni (strain 129Pt) (Haemophilus somnus) protein is 6,7-dimethyl-8-ribityllumazine synthase.